A 474-amino-acid polypeptide reads, in one-letter code: Serine/threonine-protein kinase ksp1 (474 aa).

The Protein kinase domain maps to 9–280 (YKVERPLNKG…EAVLAVTKWT (272 aa)). ATP-binding positions include 15-23 (LNKGSYGTV) and lysine 43. Residue aspartate 137 is the Proton acceptor of the active site. Residues 345-373 (VDENISTSSSPRSPASLAPVNNSERSYDS) are disordered. A compositionally biased stretch (low complexity) spans 350 to 363 (STSSSPRSPASLAP). Serine 353, serine 354, serine 357, serine 378, serine 404, and serine 413 each carry phosphoserine.

Belongs to the protein kinase superfamily. Ser/Thr protein kinase family.

The protein localises to the cytoplasm. The protein resides in the nucleus. The enzyme catalyses L-seryl-[protein] + ATP = O-phospho-L-seryl-[protein] + ADP + H(+). It catalyses the reaction L-threonyl-[protein] + ATP = O-phospho-L-threonyl-[protein] + ADP + H(+). In Schizosaccharomyces pombe (strain 972 / ATCC 24843) (Fission yeast), this protein is Serine/threonine-protein kinase ksp1 (ksp1).